Here is an 865-residue protein sequence, read N- to C-terminus: Bifunctional uridylyltransferase/uridylyl-removing enzyme (865 aa).

Residues 1–318 (MPHVDLNPLK…FPRPDSDARL (318 aa)) are uridylyltransferase. The tract at residues 319–675 (IDDDFRNLRE…VRPTEHGEGL (357 aa)) is uridylyl-removing. Positions 437–559 (VDQHTLAVVR…VGDERRLAAL (123 aa)) constitute an HD domain. ACT domains follow at residues 676–762 (QVMV…RLPH) and 789–865 (RLSV…QQAA). The interval 747 to 767 (DPHAARHAHAPRRLPHSHARR) is disordered. The span at 751–767 (ARHAHAPRRLPHSHARR) shows a compositional bias: basic residues.

Belongs to the GlnD family. Mg(2+) serves as cofactor.

The catalysed reaction is [protein-PII]-L-tyrosine + UTP = [protein-PII]-uridylyl-L-tyrosine + diphosphate. It carries out the reaction [protein-PII]-uridylyl-L-tyrosine + H2O = [protein-PII]-L-tyrosine + UMP + H(+). With respect to regulation, uridylyltransferase (UTase) activity is inhibited by glutamine, while glutamine activates uridylyl-removing (UR) activity. Its function is as follows. Modifies, by uridylylation and deuridylylation, the PII regulatory proteins (GlnB and homologs), in response to the nitrogen status of the cell that GlnD senses through the glutamine level. Under low glutamine levels, catalyzes the conversion of the PII proteins and UTP to PII-UMP and PPi, while under higher glutamine levels, GlnD hydrolyzes PII-UMP to PII and UMP (deuridylylation). Thus, controls uridylylation state and activity of the PII proteins, and plays an important role in the regulation of nitrogen assimilation and metabolism. The polypeptide is Bifunctional uridylyltransferase/uridylyl-removing enzyme (Bordetella pertussis (strain Tohama I / ATCC BAA-589 / NCTC 13251)).